A 280-amino-acid polypeptide reads, in one-letter code: 4-diphosphocytidyl-2-C-methyl-D-erythritol kinase (280 aa).

Lys11 is an active-site residue. An ATP-binding site is contributed by 95 to 105 (PVGAGLGGGSS). Residue Asp137 is part of the active site.

This sequence belongs to the GHMP kinase family. IspE subfamily.

It catalyses the reaction 4-CDP-2-C-methyl-D-erythritol + ATP = 4-CDP-2-C-methyl-D-erythritol 2-phosphate + ADP + H(+). Its pathway is isoprenoid biosynthesis; isopentenyl diphosphate biosynthesis via DXP pathway; isopentenyl diphosphate from 1-deoxy-D-xylulose 5-phosphate: step 3/6. In terms of biological role, catalyzes the phosphorylation of the position 2 hydroxy group of 4-diphosphocytidyl-2C-methyl-D-erythritol. This chain is 4-diphosphocytidyl-2-C-methyl-D-erythritol kinase, found in Geobacter sp. (strain M21).